The following is a 316-amino-acid chain: ATP synthase gamma chain (316 aa).

Belongs to the ATPase gamma chain family. F-type ATPases have 2 components, CF(1) - the catalytic core - and CF(0) - the membrane proton channel. CF(1) has five subunits: alpha(3), beta(3), gamma(1), delta(1), epsilon(1). CF(0) has three main subunits: a, b and c.

The protein localises to the cellular thylakoid membrane. Functionally, produces ATP from ADP in the presence of a proton gradient across the membrane. The gamma chain is believed to be important in regulating ATPase activity and the flow of protons through the CF(0) complex. The chain is ATP synthase gamma chain from Prochlorococcus marinus (strain MIT 9313).